We begin with the raw amino-acid sequence, 459 residues long: ATP synthase subunit beta (459 aa).

An ATP-binding site is contributed by 149-156 (GGAGVGKT).

Belongs to the ATPase alpha/beta chains family. F-type ATPases have 2 components, CF(1) - the catalytic core - and CF(0) - the membrane proton channel. CF(1) has five subunits: alpha(3), beta(3), gamma(1), delta(1), epsilon(1). CF(0) has three main subunits: a(1), b(2) and c(9-12). The alpha and beta chains form an alternating ring which encloses part of the gamma chain. CF(1) is attached to CF(0) by a central stalk formed by the gamma and epsilon chains, while a peripheral stalk is formed by the delta and b chains.

It localises to the cell inner membrane. It catalyses the reaction ATP + H2O + 4 H(+)(in) = ADP + phosphate + 5 H(+)(out). Its function is as follows. Produces ATP from ADP in the presence of a proton gradient across the membrane. The catalytic sites are hosted primarily by the beta subunits. The sequence is that of ATP synthase subunit beta from Pseudomonas savastanoi pv. phaseolicola (strain 1448A / Race 6) (Pseudomonas syringae pv. phaseolicola (strain 1448A / Race 6)).